The chain runs to 368 residues: Branched-chain-amino-acid aminotransferase (368 aa).

Arg101 provides a ligand contact to pyridoxal 5'-phosphate. At Lys204 the chain carries N6-(pyridoxal phosphate)lysine. Residues Tyr209 and 271 to 272 contribute to the pyridoxal 5'-phosphate site; that span reads IT. Lys299 is covalently cross-linked (Isoglutamyl lysine isopeptide (Lys-Gln) (interchain with Q-Cter in protein Pup)). Thr314 provides a ligand contact to pyridoxal 5'-phosphate.

This sequence belongs to the class-IV pyridoxal-phosphate-dependent aminotransferase family. In terms of assembly, homodimer. Pyridoxal 5'-phosphate is required as a cofactor.

It catalyses the reaction L-isoleucine + 2-oxoglutarate = (S)-3-methyl-2-oxopentanoate + L-glutamate. The enzyme catalyses L-valine + 2-oxoglutarate = 3-methyl-2-oxobutanoate + L-glutamate. It carries out the reaction L-leucine + 2-oxoglutarate = 4-methyl-2-oxopentanoate + L-glutamate. It participates in amino-acid biosynthesis; L-isoleucine biosynthesis; L-isoleucine from 2-oxobutanoate: step 4/4. Its pathway is amino-acid biosynthesis; L-leucine biosynthesis; L-leucine from 3-methyl-2-oxobutanoate: step 4/4. It functions in the pathway amino-acid biosynthesis; L-valine biosynthesis; L-valine from pyruvate: step 4/4. Inhibited by ammonium sulfate at millimolar concentrations and by O-benzylhydroxylamine (Obe). In terms of biological role, catalyzes the reversible transfers of an amino group from glutamate to the alpha-ketoacid of the respective amino acid in the final step in the biosynthesis of branchedchain amino acids. The amino acids can be ranked in the following order with respect to their efficiency as amino donor: Leu &gt; Ile &gt; Val. This chain is Branched-chain-amino-acid aminotransferase (ilvE), found in Mycolicibacterium smegmatis (strain ATCC 700084 / mc(2)155) (Mycobacterium smegmatis).